The following is a 150-amino-acid chain: UPF0336 protein SCO4636 (150 aa).

The 109-residue stretch at 8–116 (VGRSYPPTAP…STIEAIKSMA (109 aa)) folds into the MaoC-like domain.

Belongs to the UPF0336 family.

The sequence is that of UPF0336 protein SCO4636 from Streptomyces coelicolor (strain ATCC BAA-471 / A3(2) / M145).